Consider the following 144-residue polypeptide: F420-non-reducing hydrogenase vhc iron-sulfur subunit D (144 aa).

The protein belongs to the MvhD/VhuD family. In terms of assembly, the F420-non-reducing hydrogenase vhc is composed of three subunits; VhcA, VhcD and VhcG. [2Fe-2S] cluster serves as cofactor.

This Methanococcus voltae protein is F420-non-reducing hydrogenase vhc iron-sulfur subunit D (vhcD).